A 58-amino-acid polypeptide reads, in one-letter code: Birtoxin (58 aa).

In terms of domain architecture, LCN-type CS-alpha/beta spans V3–V58. Intrachain disulfides connect C18–C41, C27–C46, and C31–C48.

As to expression, expressed by the venom gland.

The protein resides in the secreted. Its function is as follows. Beta toxins bind voltage-independently at site-4 of sodium channels (Nav) and shift the voltage of activation toward more negative potentials thereby affecting sodium channel activation and promoting spontaneous and repetitive firing. Moderately toxic, but very high abundant. Does not target reptilian channels. Does not produce effect when administered to blowfly and cabbage looper larvae. In mice, produces convulsions, tremors, increased ventilation and, subsequently, death. In Parabuthus transvaalicus (Transvaal thick-tailed scorpion), this protein is Birtoxin.